The primary structure comprises 804 residues: Leucine--tRNA ligase (804 aa).

A 'HIGH' region motif is present at residues 40-51; the sequence is PYPSGQGLHVGH. Residues 576-580 carry the 'KMSKS' region motif; that stretch reads KMSKS. Lys579 provides a ligand contact to ATP.

This sequence belongs to the class-I aminoacyl-tRNA synthetase family.

It is found in the cytoplasm. The catalysed reaction is tRNA(Leu) + L-leucine + ATP = L-leucyl-tRNA(Leu) + AMP + diphosphate. In Oceanobacillus iheyensis (strain DSM 14371 / CIP 107618 / JCM 11309 / KCTC 3954 / HTE831), this protein is Leucine--tRNA ligase.